We begin with the raw amino-acid sequence, 395 residues long: Guanine nucleotide-binding protein subunit beta-5b (395 aa).

7 WD repeats span residues 103 to 142, 145 to 184, 193 to 234, 235 to 276, 279 to 318, 320 to 362, and 365 to 395; these read GHGNKVLCMDWCRDKRRIVSSSQDGKVIVWDAYTTNKEHA, MPCTWVMACAYAPSGCAVACGGLDNKCSVYPLSLDKNENL, MHTN…QSFH, GHSA…NVQS, THDSDINSVKYYPSGDAFASGSDDATCRLYDLRADREVAI, SKDS…RVAI, and GHENRVSTVRVSPDGTAFCSGSWDNTLRIWA.

It belongs to the WD repeat G protein beta family. May interact with RGS9; this interaction stabilizes both proteins and increases RGS9 GTPase-activating protein (GAP) activity, hence accelerating the deactivation of D(2) dopamine receptor-mediated signaling.

It localises to the membrane. In terms of biological role, enhances GTPase-activating protein (GAP) activity of regulator of G protein signaling (RGS) proteins, such as RGS7 and RGS9, hence involved in the termination of the signaling initiated by the G protein coupled receptors (GPCRs) by accelerating the GTP hydrolysis on the G-alpha subunits, thereby promoting their inactivation. Increases RGS7 GTPase-activating protein (GAP) activity, thereby regulating mood and cognition. Increases RGS9 GTPase-activating protein (GAP) activity, hence contributes to the deactivation of G protein signaling initiated by D(2) dopamine receptors. Along with gnb5a, plays an important role in neuronal signaling, including in the parasympathetic, but not sympathetic, control of heart rate. The chain is Guanine nucleotide-binding protein subunit beta-5b from Danio rerio (Zebrafish).